Here is an 862-residue protein sequence, read N- to C-terminus: Phosphatidic acid phosphohydrolase 1 (862 aa).

An N-LIP region spans residues 19–104; that stretch reads NPATLSGAID…VPDELLVSPV (86 aa). Disordered regions lie at residues 104–183 and 300–341; these read VMSA…SVEE and GSTL…AGSG. Residues 105 to 117 show a composition bias toward polar residues; it reads MSATSSPPQSPET. Phosphoserine is present on residues serine 110 and serine 114. Residues 132–143 show a composition bias toward basic and acidic residues; sequence NENKKKEKKVLE. 2 stretches are compositionally biased toward low complexity: residues 161–179 and 300–313; these read SETT…TPPD and GSTL…PSGS. Phosphoserine is present on serine 168. The DXDXT motif signature appears at 398-402; that stretch reads DIDGT. N6-acetyllysine is present on lysine 496. A Phosphoserine modification is found at serine 511. A Phosphoserine; by CDC28 modification is found at serine 602. Residues 648-732 form a disordered region; it reads SDISNDDSDN…TPNKSTMSKG (85 aa). Residues 651 to 663 are compositionally biased toward acidic residues; that stretch reads SNDDSDNIDEDTD. Composition is skewed to polar residues over residues 664 to 679 and 687 to 699; these read VSQQ…NSVK and PQRN…NNNE. Residues 710 to 730 are compositionally biased toward low complexity; the sequence is ASDLVSSHSSSGSTPNKSTMS. Threonine 723 bears the Phosphothreonine; by CDC28 mark. Serine 744 carries the post-translational modification Phosphoserine; by CDC28. 3 positions are modified to phosphoserine: serine 748, serine 773, and serine 774. Positions 757–780 are disordered; it reads MDDEDSNYNRTKSRRASSAAATSI. An N6-acetyllysine modification is found at lysine 801. The interval 807–862 is disordered; it reads DVHSLGNSDTESRREQSVNETGRNQLPHNSMDDKDLDSRVSDEFDDDEFDEDEFED. Residues serine 810 and serine 814 each carry the phosphoserine modification. Threonine 816 is subject to Phosphothreonine. The span at 824–834 shows a compositional bias: polar residues; sequence VNETGRNQLPH. Residues 836–848 are compositionally biased toward basic and acidic residues; sequence SMDDKDLDSRVSD. Phosphoserine is present on residues serine 844 and serine 847. The segment covering 849-862 has biased composition (acidic residues); the sequence is EFDDDEFDEDEFED.

The protein belongs to the lipin family. The cofactor is Mg(2+). Post-translationally, acetylation at Lys-496 and Lys-801 by ESA1 promotes synthesis of diacylglycerol. Phosphorylated by CDC28 at the onset of mitosis, and dephosphorylated by the NEM1-SPO7 complex. Phosphorylation regulates recruitment on promoters of lipid biosynthetic enzymes.

Its subcellular location is the cytoplasm. It is found in the nucleus membrane. It localises to the endoplasmic reticulum membrane. It carries out the reaction a 1,2-diacyl-sn-glycero-3-phosphate + H2O = a 1,2-diacyl-sn-glycerol + phosphate. Its activity is regulated as follows. Phenylglyoxal and propranolol inhibit activity in dose-dependent manners with IC(50) values of 1.3 mM and 0.2 mM, respectively. Sertraline inhibits activity in a dose-dependent manner with an IC(50) value of 85 uM; the inhibitory effects of sertraline and propranolol are additive. In terms of biological role, mg(2+)-dependent phosphatidate (PA) phosphatase which catalyzes the dephosphorylation of PA to yield diacylglycerol. Required for de novo lipid synthesis and formation of lipid droplets. Controls transcription of phospholipid biosynthetic genes and nuclear structure by regulating the amount of membrane present at the nuclear envelope. Involved in plasmid maintenance, in respiration and in cell proliferation. The protein is Phosphatidic acid phosphohydrolase 1 (PAH1) of Saccharomyces cerevisiae (strain ATCC 204508 / S288c) (Baker's yeast).